Here is a 253-residue protein sequence, read N- to C-terminus: MTEFVVLIPARLDSSRLPGKALADIHGKPMVVRVAEQAAKSKAARVVVATDHPDIQTACQAHGIEVVMTSNRHESGTTRLAEAAAALKLPPHLIVVNVQGDEPLIAPELIDRTAEVLVENNVQMATAGHELHDFDELMNPNAVKVVLDKNGNAIYFSRAPIPYPRDAMRAGKREMPSETAVLRHIGIYAYRVGFLQRYAEMSVSPLETIESLEQLRVLWHGYPIAVETAKEAPAAGVDTQEDLDRVRAVFQTV.

The protein belongs to the KdsB family.

It localises to the cytoplasm. The enzyme catalyses 3-deoxy-alpha-D-manno-oct-2-ulosonate + CTP = CMP-3-deoxy-beta-D-manno-octulosonate + diphosphate. Its pathway is nucleotide-sugar biosynthesis; CMP-3-deoxy-D-manno-octulosonate biosynthesis; CMP-3-deoxy-D-manno-octulosonate from 3-deoxy-D-manno-octulosonate and CTP: step 1/1. It participates in bacterial outer membrane biogenesis; lipopolysaccharide biosynthesis. Functionally, activates KDO (a required 8-carbon sugar) for incorporation into bacterial lipopolysaccharide in Gram-negative bacteria. The chain is 3-deoxy-manno-octulosonate cytidylyltransferase from Neisseria gonorrhoeae (strain ATCC 700825 / FA 1090).